The chain runs to 164 residues: V-type proton ATPase subunit c' (164 aa).

Residues 1–16 lie on the Lumenal side of the membrane; the sequence is MDMVASDNVYAPLYAP. The chain crosses the membrane as a helical span at residues 17 to 37; the sequence is FFGFAGCALAMILSCLGAAIG. Residues 38–59 are Cytoplasmic-facing; it reads TAKSGIGIAGIGTFKPELIMKS. The helical transmembrane segment at 60-80 threads the bilayer; that stretch reads LIPVVMSGILAIYGLVVAVLI. At 81–98 the chain is on the lumenal side; that stretch reads AGNLSPTEEYTLFNGFMH. The helical transmembrane segment at 99 to 119 threads the bilayer; it reads LSCGLCVGFACLSSGYAIGIV. The Cytoplasmic portion of the chain corresponds to 120–136; the sequence is GDVGVRKYMHQPRLFVG. The chain crosses the membrane as a helical span at residues 137-157; that stretch reads IVLILIFSEVLGLYGMIIALI. The Lumenal segment spans residues 158–164; it reads LNTKGSE.

The protein belongs to the V-ATPase proteolipid subunit family. In terms of assembly, V-ATPase is a heteromultimeric enzyme composed of a peripheral catalytic V1 complex (components A to H) attached to an integral membrane V0 proton pore complex (components: a, c, c', c'', d, e, f and VOA1). The decameric c-ring forms the proton-conducting pore, and is composed of eight proteolipid subunits c, one subunit c' and one subunit c''.

The protein resides in the vacuole membrane. Proton-conducting pore forming subunit of the V0 complex of vacuolar(H+)-ATPase (V-ATPase), a multisubunit enzyme composed of a peripheral complex (V1) that hydrolyzes ATP and a membrane integral complex (V0) that translocates protons. V-ATPase is responsible for acidifying and maintaining the pH of intracellular compartments. This chain is V-type proton ATPase subunit c' (VMA11), found in Candida glabrata (strain ATCC 2001 / BCRC 20586 / JCM 3761 / NBRC 0622 / NRRL Y-65 / CBS 138) (Yeast).